We begin with the raw amino-acid sequence, 324 residues long: Probable pectinesterase A (324 aa).

A signal peptide spans 1–19; it reads MHGSLLKLALLSFSLASSA. Gln-142 provides a ligand contact to substrate. Asp-165 serves as the catalytic Proton donor. Asp-186 functions as the Nucleophile in the catalytic mechanism. Substrate contacts are provided by Arg-246 and Trp-248. N-linked (GlcNAc...) asparagine glycosylation is present at Asn-285.

This sequence belongs to the pectinesterase family.

The protein resides in the secreted. The catalysed reaction is [(1-&gt;4)-alpha-D-galacturonosyl methyl ester](n) + n H2O = [(1-&gt;4)-alpha-D-galacturonosyl](n) + n methanol + n H(+). Its pathway is glycan metabolism; pectin degradation; 2-dehydro-3-deoxy-D-gluconate from pectin: step 1/5. Its function is as follows. Involved in maceration and soft-rotting of plant tissue. This Aspergillus flavus (strain ATCC 200026 / FGSC A1120 / IAM 13836 / NRRL 3357 / JCM 12722 / SRRC 167) protein is Probable pectinesterase A (pmeA).